Reading from the N-terminus, the 212-residue chain is HTH-type transcriptional repressor KstR (212 aa).

Residues 1–11 are compositionally biased toward low complexity; it reads MTTSSRSRSST. The tract at residues 1-28 is disordered; it reads MTTSSRSRSSTVAAATLGEDDLSSNAQK. The 61-residue stretch at 28–88 folds into the HTH tetR-type domain; it reads KERRKRILDA…SALAREFERI (61 aa). A DNA-binding region (H-T-H motif) is located at residues 51 to 70; the sequence is QMRAVAERADVAVGTLYRYF.

As to quaternary structure, homodimer.

Functionally, controls the expression of genes used for utilizing diverse lipids as energy sources. The chain is HTH-type transcriptional repressor KstR (kstR) from Rhodococcus jostii (strain RHA1).